We begin with the raw amino-acid sequence, 257 residues long: Large ribosomal subunit protein uL2 (257 aa).

The disordered stretch occupies residues 207-231; sequence VEHPFGGGNHQHIGKPSTIRRDAPA.

This sequence belongs to the universal ribosomal protein uL2 family. In terms of assembly, component of the large ribosomal subunit.

The protein resides in the cytoplasm. Component of the large ribosomal subunit. The ribosome is a large ribonucleoprotein complex responsible for the synthesis of proteins in the cell. The polypeptide is Large ribosomal subunit protein uL2 (rpl8) (Xenopus laevis (African clawed frog)).